Consider the following 184-residue polypeptide: MDSFELNKILGAVLGTCLILLVTSFTANALFSPKMPEKPGFEIAVKEDAGHGKEGGAAAAASEPIEKLLQTASVEKGAAAAKKCGACHTFEKGGPNRVGPNLYGVVGEARGEGRNGFNFSAAMKGKGGTWTFDDLNKFIANPKGFIPGTAMGFAGIPKDSERADVIAYLNSLSEHPKPLPTASK.

The Cytoplasmic portion of the chain corresponds to 1–10; it reads MDSFELNKIL. The chain crosses the membrane as a helical; Signal-anchor span at residues 11–31; that stretch reads GAVLGTCLILLVTSFTANALF. The Periplasmic segment spans residues 32 to 184; that stretch reads SPKMPEKPGF…HPKPLPTASK (153 aa). Heme c-binding residues include Cys84, Cys87, His88, and Met151.

It belongs to the cytochrome c family. Post-translationally, binds 1 heme c group covalently per subunit.

It localises to the cell membrane. Its function is as follows. May be involved in electron transfer from bc1 complex to aa3. This Bradyrhizobium diazoefficiens (strain JCM 10833 / BCRC 13528 / IAM 13628 / NBRC 14792 / USDA 110) protein is Cytochrome c homolog (cycM).